Reading from the N-terminus, the 1045-residue chain is Tyrosine-protein kinase-like otk (1045 aa).

Positions 1–25 (MPIVMDMNMLLMLSLAFTVMAPASA) are cleaved as a signal peptide. 5 consecutive Ig-like C2-type domains span residues 26 to 116 (SSSR…AKLS), 115 to 200 (LSVI…RVMS), 260 to 373 (PEGL…APVN), 376 to 469 (PGAL…VAIN), and 474 to 564 (PRFS…VRLL). Residues 26–587 (SSSRFTQPPQ…AGDGFLVTRA (562 aa)) are Extracellular-facing. Intrachain disulfides connect Cys-49/Cys-97, Cys-139/Cys-189, Cys-285/Cys-362, and Cys-406/Cys-453. N-linked (GlcNAc...) asparagine glycans are attached at residues Asn-344, Asn-424, Asn-435, Asn-442, Asn-450, Asn-463, Asn-518, and Asn-530. Residues Cys-496 and Cys-548 are joined by a disulfide bond. A helical membrane pass occupies residues 588–608 (VLITMTVALAYIVLVVGLMLW). At 609 to 1045 (CRYRRQARKA…LSKAMQAAEK (437 aa)) the chain is on the cytoplasmic side. The segment at 628-676 (AGGDQAESGKNTEQEPCLSKQRNGHGKSRTAANGDAQKSDDTACSQQSK) is disordered. A Phosphoserine modification is found at Ser-681. The region spanning 695-1040 (LSELIQIGRG…QLGAALSKAM (346 aa)) is the Protein kinase; inactive domain. A disordered region spans residues 722–790 (ASPSDKDADT…QPQEQAQSES (69 aa)). Over residues 725 to 736 (SDKDADTEKQHS) the composition is skewed to basic and acidic residues. Positions 743 to 752 (GASGASGCGS) are enriched in gly residues. Residues 771–782 (DDIEEIKEEEQP) are compositionally biased toward acidic residues.

Belongs to the protein kinase superfamily. Tyr protein kinase family. Insulin receptor subfamily. Interacts with plexA; component of a receptor complex that mediates the repulsive signaling in response to Semaphorin ligands.

The protein localises to the cell membrane. Functionally, acts as a calcium-dependent, homophilic cell adhesion molecule that regulates neural recognition during the development of the nervous system. Component of the repulsive Plexin signaling response to regulate motor axon guidance at the embryonic stage. Also component of a receptor complex that is required in the adult visual system to innervate the lamina layer; specific targeting of R1-R6 axons. This is Tyrosine-protein kinase-like otk from Drosophila mojavensis (Fruit fly).